Reading from the N-terminus, the 209-residue chain is Uracil phosphoribosyltransferase (209 aa).

Residues R79, R104, and D131–S139 contribute to the 5-phospho-alpha-D-ribose 1-diphosphate site. Uracil contacts are provided by residues I194 and G199–A201. D200 contributes to the 5-phospho-alpha-D-ribose 1-diphosphate binding site.

It belongs to the UPRTase family. The cofactor is Mg(2+).

It carries out the reaction UMP + diphosphate = 5-phospho-alpha-D-ribose 1-diphosphate + uracil. Its pathway is pyrimidine metabolism; UMP biosynthesis via salvage pathway; UMP from uracil: step 1/1. Allosterically activated by GTP. In terms of biological role, catalyzes the conversion of uracil and 5-phospho-alpha-D-ribose 1-diphosphate (PRPP) to UMP and diphosphate. This chain is Uracil phosphoribosyltransferase, found in Staphylococcus epidermidis (strain ATCC 35984 / DSM 28319 / BCRC 17069 / CCUG 31568 / BM 3577 / RP62A).